We begin with the raw amino-acid sequence, 451 residues long: Phosphoglucosamine mutase (451 aa).

Ser-101 functions as the Phosphoserine intermediate in the catalytic mechanism. Positions 101, 240, 242, and 244 each coordinate Mg(2+). Ser-101 carries the phosphoserine modification.

It belongs to the phosphohexose mutase family. Requires Mg(2+) as cofactor. Post-translationally, activated by phosphorylation.

The catalysed reaction is alpha-D-glucosamine 1-phosphate = D-glucosamine 6-phosphate. Catalyzes the conversion of glucosamine-6-phosphate to glucosamine-1-phosphate. The protein is Phosphoglucosamine mutase of Nitrosococcus oceani (strain ATCC 19707 / BCRC 17464 / JCM 30415 / NCIMB 11848 / C-107).